The primary structure comprises 82 residues: MSGHTSVSFLLLSIVALGMVATVICSCDSEFSSEFCERPEESCSCSTHTCCHWARRDQCMKPQRCISAQKGNGRRRLIHMQK.

A signal peptide spans 1 to 25 (MSGHTSVSFLLLSIVALGMVATVIC). 4-carboxyglutamate is present on residues E30, E34, E37, E40, and E41. N72 is subject to Asparagine amide. A propeptide spanning residues 77–82 (LIHMQK) is cleaved from the precursor.

In terms of processing, contains 4 disulfide bonds. Expressed by the venom duct.

It is found in the secreted. This chain is Conotoxin Gla-TxX, found in Conus textile (Cloth-of-gold cone).